We begin with the raw amino-acid sequence, 101 residues long: MTLTKAELADLLFEKVGFNKREAKDMVESFYEEVRIALQNGDGVKLSGFGNFQLRDKPQRPGRNPKTGEEIPITARRVVTFHASQKLKAMVEKNQHGKDNA.

The tract at residues 49 to 70 (FGNFQLRDKPQRPGRNPKTGEE) is disordered.

It belongs to the bacterial histone-like protein family. Heterodimer of an alpha and a beta chain.

In terms of biological role, this protein is one of the two subunits of integration host factor, a specific DNA-binding protein that functions in genetic recombination as well as in transcriptional and translational control. The polypeptide is Integration host factor subunit alpha (Nitrosospira multiformis (strain ATCC 25196 / NCIMB 11849 / C 71)).